The chain runs to 1399 residues: Meiosis-specific protein ASY2 (1399 aa).

The 239-residue stretch at 10–248 (QQSLILTTEL…SQHHVLTVKV (239 aa)) folds into the HORMA domain. The span at 257–266 (PCEDENDNMQ) shows a compositional bias: acidic residues. Disordered stretches follow at residues 257-281 (PCED…HDDQ), 487-525 (SKPK…SSEP), 617-656 (RLTG…AAPE), 940-974 (PPPP…VDQV), and 1045-1090 (DQDK…AAPK). Over residues 267 to 281 (DDERSKGPDSLHDDQ) the composition is skewed to basic and acidic residues. Positions 509–523 (SAPPSSEPKSAPPSS) are enriched in pro residues. Positions 617 to 631 (RLTGNPSNEAQSSRS) are enriched in polar residues. Residues 1205-1246 (MASLRDAAEIHKAEMSSLNDEVKRLNSREADLQKEFSDLQVA) adopt a coiled-coil conformation.

It localises to the chromosome. The protein resides in the nucleus. Functionally, required for normal meiosis. This is Meiosis-specific protein ASY2 from Arabidopsis thaliana (Mouse-ear cress).